The following is a 176-amino-acid chain: Ribosome maturation factor RimM (176 aa).

In terms of domain architecture, PRC barrel spans 97-176 (EDEFYWRDLI…QILVDWDPDF (80 aa)).

Belongs to the RimM family. Binds ribosomal protein uS19.

The protein resides in the cytoplasm. Its function is as follows. An accessory protein needed during the final step in the assembly of 30S ribosomal subunit, possibly for assembly of the head region. Essential for efficient processing of 16S rRNA. May be needed both before and after RbfA during the maturation of 16S rRNA. It has affinity for free ribosomal 30S subunits but not for 70S ribosomes. This Shewanella putrefaciens (strain CN-32 / ATCC BAA-453) protein is Ribosome maturation factor RimM.